Here is a 348-residue protein sequence, read N- to C-terminus: Phosphate acyltransferase (348 aa).

The protein belongs to the PlsX family. In terms of assembly, homodimer. Probably interacts with PlsY.

Its subcellular location is the cytoplasm. The enzyme catalyses a fatty acyl-[ACP] + phosphate = an acyl phosphate + holo-[ACP]. The protein operates within lipid metabolism; phospholipid metabolism. Its function is as follows. Catalyzes the reversible formation of acyl-phosphate (acyl-PO(4)) from acyl-[acyl-carrier-protein] (acyl-ACP). This enzyme utilizes acyl-ACP as fatty acyl donor, but not acyl-CoA. This chain is Phosphate acyltransferase, found in Nitrosomonas europaea (strain ATCC 19718 / CIP 103999 / KCTC 2705 / NBRC 14298).